Here is a 101-residue protein sequence, read N- to C-terminus: Aspartyl/glutamyl-tRNA(Asn/Gln) amidotransferase subunit C (101 aa).

The protein belongs to the GatC family. In terms of assembly, heterotrimer of A, B and C subunits.

The enzyme catalyses L-glutamyl-tRNA(Gln) + L-glutamine + ATP + H2O = L-glutaminyl-tRNA(Gln) + L-glutamate + ADP + phosphate + H(+). The catalysed reaction is L-aspartyl-tRNA(Asn) + L-glutamine + ATP + H2O = L-asparaginyl-tRNA(Asn) + L-glutamate + ADP + phosphate + 2 H(+). In terms of biological role, allows the formation of correctly charged Asn-tRNA(Asn) or Gln-tRNA(Gln) through the transamidation of misacylated Asp-tRNA(Asn) or Glu-tRNA(Gln) in organisms which lack either or both of asparaginyl-tRNA or glutaminyl-tRNA synthetases. The reaction takes place in the presence of glutamine and ATP through an activated phospho-Asp-tRNA(Asn) or phospho-Glu-tRNA(Gln). This Lactococcus lactis subsp. cremoris (strain SK11) protein is Aspartyl/glutamyl-tRNA(Asn/Gln) amidotransferase subunit C.